A 398-amino-acid polypeptide reads, in one-letter code: GPI mannosyltransferase 1 (398 aa).

Transmembrane regions (helical) follow at residues 4-24 (LKYL…FGLY), 79-99 (WYHF…LIIL), 114-136 (MILS…GSAE), 156-176 (VILS…PIIY), 209-229 (IIIT…KYGW), 271-291 (IEKI…PLIF), 305-325 (FVFV…FLIF), 341-361 (ITGI…LYFA), and 375-395 (GLMY…MKFI).

The protein belongs to the PIGM family.

It is found in the endoplasmic reticulum membrane. It participates in glycolipid biosynthesis; glycosylphosphatidylinositol-anchor biosynthesis. Its function is as follows. Mannosyltransferase involved in glycosylphosphatidylinositol-anchor biosynthesis. Transfers the first alpha-1,4-mannose to GlcN-acyl-PI during GPI precursor assembly. Required for cell wall integrity. The polypeptide is GPI mannosyltransferase 1 (GPI14) (Candida albicans (strain SC5314 / ATCC MYA-2876) (Yeast)).